The sequence spans 321 residues: Cytochrome f (321 aa).

The N-terminal stretch at 1-37 (MKIYRQIKQSFSITKIVFSFFISLLLNLVAQPTICQA) is a signal peptide. Residues phenylalanine 38, cysteine 58, cysteine 61, and histidine 62 each contribute to the heme site. The helical transmembrane segment at 287–306 (VQGLIAFFISVVLAQIFLVL) threads the bilayer.

This sequence belongs to the cytochrome f family. In terms of assembly, the 4 large subunits of the cytochrome b6-f complex are cytochrome b6, subunit IV (17 kDa polypeptide, petD), cytochrome f and the Rieske protein, while the 4 small subunits are PetG, PetL, PetM and PetN. The complex functions as a dimer. The cofactor is heme.

The protein localises to the plastid. It is found in the cyanelle thylakoid membrane. In terms of biological role, component of the cytochrome b6-f complex, which mediates electron transfer between photosystem II (PSII) and photosystem I (PSI), cyclic electron flow around PSI, and state transitions. This Cyanophora paradoxa protein is Cytochrome f (petA).